Reading from the N-terminus, the 300-residue chain is Bifunctional protein FolD (300 aa).

Residues 169–171 (GHS) and Ile235 contribute to the NADP(+) site.

Belongs to the tetrahydrofolate dehydrogenase/cyclohydrolase family. Homodimer.

It carries out the reaction (6R)-5,10-methylene-5,6,7,8-tetrahydrofolate + NADP(+) = (6R)-5,10-methenyltetrahydrofolate + NADPH. It catalyses the reaction (6R)-5,10-methenyltetrahydrofolate + H2O = (6R)-10-formyltetrahydrofolate + H(+). It participates in one-carbon metabolism; tetrahydrofolate interconversion. Its function is as follows. Catalyzes the oxidation of 5,10-methylenetetrahydrofolate to 5,10-methenyltetrahydrofolate and then the hydrolysis of 5,10-methenyltetrahydrofolate to 10-formyltetrahydrofolate. This chain is Bifunctional protein FolD, found in Rhodobacter capsulatus (strain ATCC BAA-309 / NBRC 16581 / SB1003).